The following is an 89-amino-acid chain: Cell division topological specificity factor (89 aa).

This sequence belongs to the MinE family.

In terms of biological role, prevents the cell division inhibition by proteins MinC and MinD at internal division sites while permitting inhibition at polar sites. This ensures cell division at the proper site by restricting the formation of a division septum at the midpoint of the long axis of the cell. In Klebsiella pneumoniae subsp. pneumoniae (strain ATCC 700721 / MGH 78578), this protein is Cell division topological specificity factor.